The sequence spans 114 residues: Ribosome-binding factor A (114 aa).

The protein belongs to the RbfA family. Monomer. Binds 30S ribosomal subunits, but not 50S ribosomal subunits or 70S ribosomes.

It is found in the cytoplasm. In terms of biological role, one of several proteins that assist in the late maturation steps of the functional core of the 30S ribosomal subunit. Associates with free 30S ribosomal subunits (but not with 30S subunits that are part of 70S ribosomes or polysomes). Required for efficient processing of 16S rRNA. May interact with the 5'-terminal helix region of 16S rRNA. The polypeptide is Ribosome-binding factor A (Staphylococcus saprophyticus subsp. saprophyticus (strain ATCC 15305 / DSM 20229 / NCIMB 8711 / NCTC 7292 / S-41)).